A 748-amino-acid chain; its full sequence is Serine/threonine-protein kinase CG17528 (748 aa).

2 stretches are compositionally biased toward polar residues: residues 22 to 35 (QASP…SVPS) and 47 to 59 (EKTN…QEDN). Disordered stretches follow at residues 22 to 41 (QASP…NVVT) and 47 to 81 (EKTN…ELDD). Phosphoserine occurs at positions 67, 70, 73, 87, 88, and 89. T91 is modified (phosphothreonine). S93 is subject to Phosphoserine. At T100 the chain carries Phosphothreonine. 2 consecutive Doublecortin domains span residues 158 to 244 (LRIK…VEYN) and 313 to 396 (RIVT…AEDF). The region spanning 477–735 (YSLGRIIGDG…SEDILDHSWT (259 aa)) is the Protein kinase domain. ATP is bound by residues 483–491 (IGDGNFAIV) and K506. The active-site Proton acceptor is the D598.

The protein belongs to the protein kinase superfamily. CAMK Ser/Thr protein kinase family. CaMK subfamily.

The catalysed reaction is L-seryl-[protein] + ATP = O-phospho-L-seryl-[protein] + ADP + H(+). It catalyses the reaction L-threonyl-[protein] + ATP = O-phospho-L-threonyl-[protein] + ADP + H(+). In Drosophila melanogaster (Fruit fly), this protein is Serine/threonine-protein kinase CG17528.